Here is a 383-residue protein sequence, read N- to C-terminus: Acetylornithine deacetylase (383 aa).

Position 80 (His80) interacts with Zn(2+). The active site involves Asp82. A Zn(2+)-binding site is contributed by Asp112. Residue Glu144 is part of the active site. Residues Glu145, Glu169, and His355 each contribute to the Zn(2+) site.

This sequence belongs to the peptidase M20A family. ArgE subfamily. In terms of assembly, homodimer. The cofactor is Zn(2+). Co(2+) serves as cofactor. Glutathione is required as a cofactor.

It is found in the cytoplasm. The catalysed reaction is N(2)-acetyl-L-ornithine + H2O = L-ornithine + acetate. Its pathway is amino-acid biosynthesis; L-arginine biosynthesis; L-ornithine from N(2)-acetyl-L-ornithine (linear): step 1/1. Functionally, catalyzes the hydrolysis of the amide bond of N(2)-acetylated L-amino acids. Cleaves the acetyl group from N-acetyl-L-ornithine to form L-ornithine, an intermediate in L-arginine biosynthesis pathway, and a branchpoint in the synthesis of polyamines. This is Acetylornithine deacetylase from Salmonella paratyphi A (strain ATCC 9150 / SARB42).